The chain runs to 154 residues: MKRCLNKANMTTSVKIVNKSNNALPAYQTAQAAGMDLSAYITEAIVLQPLQRQLVPTGLFIELPEHTEAQIRPRSGLAFKHGITVLNSPGTIDADYRGEIKVLLVNLSNEAFTIQSGERIAQIVIAKVEHAHFVEVEELSDSLRAAAGFGSTGK.

Substrate-binding positions include 74–76 (RSG), asparagine 87, 91–93 (TID), and lysine 101.

This sequence belongs to the dUTPase family. Requires Mg(2+) as cofactor.

The enzyme catalyses dUTP + H2O = dUMP + diphosphate + H(+). It functions in the pathway pyrimidine metabolism; dUMP biosynthesis; dUMP from dCTP (dUTP route): step 2/2. Functionally, this enzyme is involved in nucleotide metabolism: it produces dUMP, the immediate precursor of thymidine nucleotides and it decreases the intracellular concentration of dUTP so that uracil cannot be incorporated into DNA. In Cytophaga hutchinsonii (strain ATCC 33406 / DSM 1761 / CIP 103989 / NBRC 15051 / NCIMB 9469 / D465), this protein is Deoxyuridine 5'-triphosphate nucleotidohydrolase.